Reading from the N-terminus, the 123-residue chain is Histone H2B (123 aa).

Positions 1-32 (MAPKAPGKGAKKAAKSKAPRAPGDRKRKRTRR) are disordered. Over residues 9-18 (GAKKAAKSKA) the composition is skewed to basic residues. S110 carries an O-linked (GlcNAc) serine glycan. A Glycyl lysine isopeptide (Lys-Gly) (interchain with G-Cter in ubiquitin) cross-link involves residue K118.

Belongs to the histone H2B family. The nucleosome is a histone octamer containing two molecules each of H2A, H2B, H3 and H4 assembled in one H3-H4 heterotetramer and two H2A-H2B heterodimers. The octamer wraps approximately 147 bp of DNA. Post-translationally, monoubiquitination of Lys-118 gives a specific tag for epigenetic transcriptional activation and is also prerequisite for histone H3 'Lys-4' and 'Lys-79' methylation. GlcNAcylation at Ser-110 promotes monoubiquitination of Lys-118. It fluctuates in response to extracellular glucose, and associates with transcribed genes.

The protein localises to the nucleus. It is found in the chromosome. Functionally, core component of nucleosome. Nucleosomes wrap and compact DNA into chromatin, limiting DNA accessibility to the cellular machineries which require DNA as a template. Histones thereby play a central role in transcription regulation, DNA repair, DNA replication and chromosomal stability. DNA accessibility is regulated via a complex set of post-translational modifications of histones, also called histone code, and nucleosome remodeling. The polypeptide is Histone H2B (Holothuria tubulosa (Tubular sea cucumber)).